Reading from the N-terminus, the 509-residue chain is Maturase K (509 aa).

Belongs to the intron maturase 2 family. MatK subfamily.

The protein localises to the plastid. Its subcellular location is the chloroplast. In terms of biological role, usually encoded in the trnK tRNA gene intron. Probably assists in splicing its own and other chloroplast group II introns. The protein is Maturase K of Banksia cuneata (Quairading banksia).